The primary structure comprises 331 residues: Protein REVEILLE 6 (331 aa).

In terms of domain architecture, HTH myb-type spans T67–Q121. A DNA-binding region (H-T-H motif) is located at residues W94 to F117. 3 disordered regions span residues K122–D166, L203–G237, and S309–T331. Residues V150–N165 show a composition bias toward polar residues. Over residues N211 to N220 the composition is skewed to low complexity. 2 stretches are compositionally biased toward basic and acidic residues: residues S226–N235 and L322–T331.

It localises to the nucleus. Functionally, probable transcription factor. RVE4, RVE6 and RVE8 are components of the circadian system acting synergistically to regulate flowering time, redundantly to regulate leaf growth, and antagonistically to regulate hypocotyl elongation; their action seems independent of ZTL and HY5. This is Protein REVEILLE 6 from Arabidopsis thaliana (Mouse-ear cress).